The following is a 301-amino-acid chain: Phosphatidylglycerol--prolipoprotein diacylglyceryl transferase (301 aa).

A run of 4 helical transmembrane segments spans residues 10 to 30 (IAFSLGPVKVHWYGLMYLAGF), 57 to 77 (LLFYAMMGVVLGGRVGYMLFY), 92 to 112 (VWEGGMSFHGGLIGVLLAVAW), and 119 to 139 (MHMFDVVDFCAPLVPVGLGFG). Residue Arg-140 coordinates a 1,2-diacyl-sn-glycero-3-phospho-(1'-sn-glycerol). Helical transmembrane passes span 202 to 222 (PSQLYEAFLEGLVMFIVLWLF), 230 to 250 (YAVSGLFALLYGVFRFLVEFV), and 264 to 284 (LTRGQILSLPLIVIGLFLFWL).

The protein belongs to the Lgt family.

Its subcellular location is the cell inner membrane. It catalyses the reaction L-cysteinyl-[prolipoprotein] + a 1,2-diacyl-sn-glycero-3-phospho-(1'-sn-glycerol) = an S-1,2-diacyl-sn-glyceryl-L-cysteinyl-[prolipoprotein] + sn-glycerol 1-phosphate + H(+). The protein operates within protein modification; lipoprotein biosynthesis (diacylglyceryl transfer). Catalyzes the transfer of the diacylglyceryl group from phosphatidylglycerol to the sulfhydryl group of the N-terminal cysteine of a prolipoprotein, the first step in the formation of mature lipoproteins. This is Phosphatidylglycerol--prolipoprotein diacylglyceryl transferase from Xylella fastidiosa (strain M23).